Consider the following 40-residue polypeptide: Large ribosomal subunit protein bL33c (40 aa).

This sequence belongs to the bacterial ribosomal protein bL33 family.

It is found in the plastid. The protein localises to the chloroplast. The chain is Large ribosomal subunit protein bL33c (rpl33) from Pisum sativum (Garden pea).